The following is a 356-amino-acid chain: 1-deoxy-D-xylulose 5-phosphate reductoisomerase (356 aa).

Residues Thr7, Gly8, Ser9, Ile10, Gly31, Asn33, and Asn111 each contribute to the NADPH site. Position 112 (Lys112) interacts with 1-deoxy-D-xylulose 5-phosphate. Glu113 contributes to the NADPH binding site. A Mn(2+)-binding site is contributed by Asp131. Residues Ser132, Glu133, Ser155, and His178 each coordinate 1-deoxy-D-xylulose 5-phosphate. Residue Glu133 participates in Mn(2+) binding. Gly184 contacts NADPH. 1-deoxy-D-xylulose 5-phosphate is bound by residues Ser191, Asn196, Lys197, and Glu200. Mn(2+) is bound at residue Glu200.

It belongs to the DXR family. Mg(2+) serves as cofactor. It depends on Mn(2+) as a cofactor.

The catalysed reaction is 2-C-methyl-D-erythritol 4-phosphate + NADP(+) = 1-deoxy-D-xylulose 5-phosphate + NADPH + H(+). The protein operates within isoprenoid biosynthesis; isopentenyl diphosphate biosynthesis via DXP pathway; isopentenyl diphosphate from 1-deoxy-D-xylulose 5-phosphate: step 1/6. Its function is as follows. Catalyzes the NADPH-dependent rearrangement and reduction of 1-deoxy-D-xylulose-5-phosphate (DXP) to 2-C-methyl-D-erythritol 4-phosphate (MEP). This Campylobacter jejuni subsp. jejuni serotype O:6 (strain 81116 / NCTC 11828) protein is 1-deoxy-D-xylulose 5-phosphate reductoisomerase.